The primary structure comprises 364 residues: MVQSAVTHFRPVMILAGGTGGHIFPGLAVAGVLRARGVPVVWLGAAGKMETHLVPKHGIEIQTIAVSGVRGHGMLALLGAPVRVLPAIFAAMRVLRRYRPRVVVSFGGFAAGPGGIAARLMGLPLIVHEQNRAPGMTNRVLARVARRVLSGFPGSFVAEEVVGNPVRKDIAALPAPGVRFAGRSGPVRLLVLGGSQGARVMNNALPVVLRVLSDSDVAVEVRHQCGEALRAETEGAYAYAGVAARVEPFISDMAAAYSWADLVVCRAGASTLAELCAAGVGSVLIPFPAAVDDHQRRNAEYLVAAGAALLLQQQDRAFYVYLESVLRDLLSNPMRRLAMAEAARGLAKSDAAECIAEIILKESI.

UDP-N-acetyl-alpha-D-glucosamine is bound by residues 19–21 (TGG), asparagine 131, arginine 167, serine 195, isoleucine 250, and glutamine 295.

It belongs to the glycosyltransferase 28 family. MurG subfamily.

It is found in the cell inner membrane. The enzyme catalyses di-trans,octa-cis-undecaprenyl diphospho-N-acetyl-alpha-D-muramoyl-L-alanyl-D-glutamyl-meso-2,6-diaminopimeloyl-D-alanyl-D-alanine + UDP-N-acetyl-alpha-D-glucosamine = di-trans,octa-cis-undecaprenyl diphospho-[N-acetyl-alpha-D-glucosaminyl-(1-&gt;4)]-N-acetyl-alpha-D-muramoyl-L-alanyl-D-glutamyl-meso-2,6-diaminopimeloyl-D-alanyl-D-alanine + UDP + H(+). It functions in the pathway cell wall biogenesis; peptidoglycan biosynthesis. Cell wall formation. Catalyzes the transfer of a GlcNAc subunit on undecaprenyl-pyrophosphoryl-MurNAc-pentapeptide (lipid intermediate I) to form undecaprenyl-pyrophosphoryl-MurNAc-(pentapeptide)GlcNAc (lipid intermediate II). This is UDP-N-acetylglucosamine--N-acetylmuramyl-(pentapeptide) pyrophosphoryl-undecaprenol N-acetylglucosamine transferase from Xylella fastidiosa (strain Temecula1 / ATCC 700964).